A 356-amino-acid polypeptide reads, in one-letter code: Histidinol-phosphate aminotransferase (356 aa).

K222 bears the N6-(pyridoxal phosphate)lysine mark.

This sequence belongs to the class-II pyridoxal-phosphate-dependent aminotransferase family. Histidinol-phosphate aminotransferase subfamily. In terms of assembly, homodimer. Requires pyridoxal 5'-phosphate as cofactor.

The catalysed reaction is L-histidinol phosphate + 2-oxoglutarate = 3-(imidazol-4-yl)-2-oxopropyl phosphate + L-glutamate. Its pathway is amino-acid biosynthesis; L-histidine biosynthesis; L-histidine from 5-phospho-alpha-D-ribose 1-diphosphate: step 7/9. This chain is Histidinol-phosphate aminotransferase, found in Lactiplantibacillus plantarum (strain ATCC BAA-793 / NCIMB 8826 / WCFS1) (Lactobacillus plantarum).